The primary structure comprises 66 residues: Alpha-bisabolene synthase (66 aa).

The protein belongs to the terpene synthase family. Tpsd subfamily. The cofactor is Mn(2+). It depends on K(+) as a cofactor.

The protein resides in the cytoplasm. It carries out the reaction (2E,6E)-farnesyl diphosphate = (E,R)-alpha-bisabolene + diphosphate. Its pathway is terpene metabolism; oleoresin biosynthesis. In terms of biological role, involved in defensive oleoresin formation in conifers in response to insect attack or other injury. Involved in sesquiterpene (C15) olefins biosynthesis. This is Alpha-bisabolene synthase from Pseudotsuga menziesii (Douglas-fir).